The chain runs to 371 residues: Peptide chain release factor 2 (371 aa).

Gln253 is modified (N5-methylglutamine).

The protein belongs to the prokaryotic/mitochondrial release factor family. Methylated by PrmC. Methylation increases the termination efficiency of RF2.

It is found in the cytoplasm. Its function is as follows. Peptide chain release factor 2 directs the termination of translation in response to the peptide chain termination codons UGA and UAA. This is Peptide chain release factor 2 (prfB) from Mycobacterium bovis (strain ATCC BAA-935 / AF2122/97).